Reading from the N-terminus, the 913-residue chain is Translation initiation factor IF-2 (913 aa).

Residues Met1–Gln322 form a disordered region. A compositionally biased stretch (low complexity) spans Val60 to Arg113. The span at Met131–Glu180 shows a compositional bias: basic and acidic residues. Low complexity-rich tracts occupy residues Glu181–Glu195, Glu203–Pro238, and Pro261–Arg277. The 168-residue stretch at Ser411–Asp578 folds into the tr-type G domain. The interval Gly420 to Thr427 is G1. Gly420–Thr427 lines the GTP pocket. The tract at residues Gly445 to His449 is G2. The G3 stretch occupies residues Asp466–Gly469. GTP-binding positions include Asp466–His470 and Asn520–Asp523. The segment at Asn520 to Asp523 is G4. The tract at residues Ser556–Lys558 is G5.

The protein belongs to the TRAFAC class translation factor GTPase superfamily. Classic translation factor GTPase family. IF-2 subfamily.

Its subcellular location is the cytoplasm. Its function is as follows. One of the essential components for the initiation of protein synthesis. Protects formylmethionyl-tRNA from spontaneous hydrolysis and promotes its binding to the 30S ribosomal subunits. Also involved in the hydrolysis of GTP during the formation of the 70S ribosomal complex. The polypeptide is Translation initiation factor IF-2 (Agrobacterium fabrum (strain C58 / ATCC 33970) (Agrobacterium tumefaciens (strain C58))).